The sequence spans 512 residues: Serine--tRNA ligase, cytoplasmic (512 aa).

Met1 is subject to N-acetylmethionine. The tract at residues 9 to 61 (RVDKGGDPALIRETQEKRFKDPGLVDQLVKADSEWRRCRFRADNLNKLKNLCS) is interaction with tRNA. Ser241 is modified (phosphoserine). Thr271 and Arg302 together coordinate L-serine. Residues 302-304 (RQE) and 318-321 (VHQF) each bind ATP. Lys323 is subject to N6-acetyllysine. Glu325 is an L-serine binding site. 391 to 394 (ELVS) is a binding site for ATP. Asn427 serves as a coordination point for L-serine. The tract at residues 472–512 (KPAPIDQEPSKKQKKQHEGSKKKAKEVTLENQLQNMEVTEA) is disordered. The segment covering 479–499 (EPSKKQKKQHEGSKKKAKEVT) has biased composition (basic and acidic residues). The short motif at 482–494 (KKQKKQHEGSKKK) is the Nuclear localization signal element. Over residues 500-512 (LENQLQNMEVTEA) the composition is skewed to polar residues.

It belongs to the class-II aminoacyl-tRNA synthetase family. Type-1 seryl-tRNA synthetase subfamily. In terms of assembly, homodimer. The tRNA molecule may bind across the dimer. Interacts with SIRT2. Interacts with METTL6; interaction is required for the tRNA N(3)-methylcytidine methyltransferase activity of METTL6.

It localises to the cytoplasm. It is found in the nucleus. It catalyses the reaction tRNA(Ser) + L-serine + ATP = L-seryl-tRNA(Ser) + AMP + diphosphate + H(+). The catalysed reaction is tRNA(Sec) + L-serine + ATP = L-seryl-tRNA(Sec) + AMP + diphosphate + H(+). The protein operates within aminoacyl-tRNA biosynthesis; selenocysteinyl-tRNA(Sec) biosynthesis; L-seryl-tRNA(Sec) from L-serine and tRNA(Sec): step 1/1. Catalyzes the attachment of serine to tRNA(Ser) in a two-step reaction: serine is first activated by ATP to form Ser-AMP and then transferred to the acceptor end of tRNA(Ser). Is probably also able to aminoacylate tRNA(Sec) with serine, to form the misacylated tRNA L-seryl-tRNA(Sec), which will be further converted into selenocysteinyl-tRNA(Sec). In the nucleus, binds to the VEGFA core promoter and prevents MYC binding and transcriptional activation by MYC. Recruits SIRT2 to the VEGFA promoter, promoting deacetylation of histone H4 at 'Lys-16' (H4K16). Thereby, inhibits the production of VEGFA and sprouting angiogenesis mediated by VEGFA. The polypeptide is Serine--tRNA ligase, cytoplasmic (Sars1) (Rattus norvegicus (Rat)).